The following is a 67-amino-acid chain: DNA gyrase inhibitor YacG (67 aa).

The Zn(2+) site is built by cysteine 10, cysteine 13, cysteine 29, and cysteine 33. The span at 44–57 (EEKRIPSSGDRSDT) shows a compositional bias: basic and acidic residues. The segment at 44-67 (EEKRIPSSGDRSDTDGWSEEENQP) is disordered.

It belongs to the DNA gyrase inhibitor YacG family. Interacts with GyrB. It depends on Zn(2+) as a cofactor.

In terms of biological role, inhibits all the catalytic activities of DNA gyrase by preventing its interaction with DNA. Acts by binding directly to the C-terminal domain of GyrB, which probably disrupts DNA binding by the gyrase. In Cronobacter sakazakii (strain ATCC BAA-894) (Enterobacter sakazakii), this protein is DNA gyrase inhibitor YacG.